The following is a 430-amino-acid chain: UDP-N-acetylglucosamine 1-carboxyvinyltransferase (430 aa).

Phosphoenolpyruvate is bound at residue 22-23; sequence KN. UDP-N-acetyl-alpha-D-glucosamine is bound at residue Arg-102. Cys-126 acts as the Proton donor in catalysis. Residue Cys-126 is modified to 2-(S-cysteinyl)pyruvic acid O-phosphothioketal. Residues 131–135, 172–175, Asp-317, and Ile-339 contribute to the UDP-N-acetyl-alpha-D-glucosamine site; these read RPVDL and KVSV.

This sequence belongs to the EPSP synthase family. MurA subfamily.

It is found in the cytoplasm. The catalysed reaction is phosphoenolpyruvate + UDP-N-acetyl-alpha-D-glucosamine = UDP-N-acetyl-3-O-(1-carboxyvinyl)-alpha-D-glucosamine + phosphate. Its pathway is cell wall biogenesis; peptidoglycan biosynthesis. Cell wall formation. Adds enolpyruvyl to UDP-N-acetylglucosamine. The protein is UDP-N-acetylglucosamine 1-carboxyvinyltransferase of Agrobacterium fabrum (strain C58 / ATCC 33970) (Agrobacterium tumefaciens (strain C58)).